The primary structure comprises 636 residues: DNA-directed RNA polymerase subunit gamma (636 aa).

Cys-71, Cys-73, Cys-86, and Cys-89 together coordinate Zn(2+). Residues Asp-467, Asp-469, and Asp-471 each contribute to the Mg(2+) site.

The protein belongs to the RNA polymerase beta' chain family. RpoC1 subfamily. As to quaternary structure, in cyanobacteria the RNAP catalytic core is composed of 2 alpha, 1 beta, 1 beta', 1 gamma and 1 omega subunit. When a sigma factor is associated with the core the holoenzyme is formed, which can initiate transcription. Mg(2+) is required as a cofactor. Requires Zn(2+) as cofactor.

The enzyme catalyses RNA(n) + a ribonucleoside 5'-triphosphate = RNA(n+1) + diphosphate. DNA-dependent RNA polymerase catalyzes the transcription of DNA into RNA using the four ribonucleoside triphosphates as substrates. The sequence is that of DNA-directed RNA polymerase subunit gamma from Picosynechococcus sp. (strain ATCC 27264 / PCC 7002 / PR-6) (Agmenellum quadruplicatum).